Reading from the N-terminus, the 36-residue chain is Cytochrome b6-f complex subunit 7 (36 aa).

The Lumenal segment spans residues 1-5 (NAAAE). The chain crosses the membrane as a helical span at residues 6–28 (IFRIAAVMNGLTLVGVAIGFVLL). Over 29 to 36 (RIEATVEE) the chain is Stromal.

It belongs to the PetM family. In terms of assembly, the 4 large subunits of the cytochrome b6-f complex are cytochrome b6, subunit IV (17 kDa polypeptide, PetD), cytochrome f and the Rieske protein, while the 4 small subunits are PetG, PetL, PetM and PetN. The complex functions as a dimer.

Its subcellular location is the plastid. It localises to the chloroplast thylakoid membrane. Functionally, component of the cytochrome b6-f complex, which mediates electron transfer between photosystem II (PSII) and photosystem I (PSI), cyclic electron flow around PSI, and state transitions. This is Cytochrome b6-f complex subunit 7 from Spinacia oleracea (Spinach).